Reading from the N-terminus, the 272-residue chain is Ribonuclease HII (272 aa).

The RNase H type-2 domain occupies 87-272 (KYVAGVDEVG…HRMSFLKNIL (186 aa)). A divalent metal cation-binding residues include D93, E94, and D188.

Belongs to the RNase HII family. Requires Mn(2+) as cofactor. Mg(2+) is required as a cofactor.

It is found in the cytoplasm. It carries out the reaction Endonucleolytic cleavage to 5'-phosphomonoester.. In terms of biological role, endonuclease that specifically degrades the RNA of RNA-DNA hybrids. This Clostridium perfringens (strain ATCC 13124 / DSM 756 / JCM 1290 / NCIMB 6125 / NCTC 8237 / Type A) protein is Ribonuclease HII.